Here is a 251-residue protein sequence, read N- to C-terminus: Probable transcriptional regulatory protein Cpar_0525 (251 aa).

This sequence belongs to the TACO1 family.

The protein localises to the cytoplasm. This is Probable transcriptional regulatory protein Cpar_0525 from Chlorobaculum parvum (strain DSM 263 / NCIMB 8327) (Chlorobium vibrioforme subsp. thiosulfatophilum).